A 1023-amino-acid chain; its full sequence is MPTITAAQIKSTLQSAKQSAANKLHSAGQSTKDALKKAAEQTRNAGNRLILLIPKDYKGQGSSLNDLVRTADELGIEVQYDEKNGTAITKQVFGTAEKLIGLTERGVTIFAPQLDKLLQKYQKAGNKLGGSAENIGDNLGKAGSVLSTFQNFLGTALSSMKIDELIKKQKSGGNVSSSELAKASIELINQLVDTAASLNNVNSFSQQLNKLGSVLSNTKHLNGVGNKLQNLPNLDNIGAGLDTVSGILSAISASFILSNADADTGTKAAAGVELTTKVLGNVGKGISQYIIAQRAAQGLSTSAAAAGLIASVVTLAISPLSFLSIADKFKRANKIEEYSQRFKKLGYDGDSLLAAFHKETGAIDASLTRISTVLASVSSGISAAATTSLVGAPVSALVGAVTGIISGILEASKQAMFEHVASKMADVIAEWEKKHGKNYFENGYDARHAAFLEDNFKILSQYNKEYSVERSVLITQQHWDTLIGELAGVTRNGDKTLSGKSYIDYYEEGKRLEKKPDEFQKQVFDPLKGNIDLSDSKSSTLLKFVTPLLTPGEEIRERRQSGKYEYITELLVKGVDKWTVKGVQDKGSVYDYSNLIQHASVGNNQYREIRIESHLGDGDDKVFLSAGSANIYAGKGHDVVYYDKTDTGYLTIDGTKATEAGNYTVTRVLGGDVKVLQEVVKEQEVSVGKRTEKTQYRSYEFTHINGKNLTETDNLYSVEELIGTTRADKFFGSKFADIFHGADGDDHIEGNDGNDRLYGDKGNDTLSGGNGDDQLYGGDGNDKLIGGAGNNYLNGGDGDDELQVQGNSLAKNVLSGGKGNDKLYGSEGADLLDGGEGNDLLKGGYGNDIYRYLSGYGHHIIDDDGGKDDKLSLADIDFRDVAFRREGNDLIMYKAEGNVLSIGHKNGITFKNWFEKESGDISNHQIEQIFDKDGRVITPDSLKKALEYQQSNNKASYVYGNDALAYGSQGNLNPLINEISKIISAAGNFDVKEERAAASLLQLSGNASDFSYGRNSITLTASA.

The next 3 helical transmembrane spans lie at 237–259 (IGAGLDTVSGILSAISASFILSN), 267–326 (KAAA…LSIA), and 364–410 (DASL…GILE). Residues K563 and K689 are each lipidated (N6-myristoyl lysine). 6 Hemolysin-type calcium-binding repeats span residues 731 to 748 (FGSKFADIFHGADGDDHI), 749 to 766 (EGNDGNDRLYGDKGNDTL), 767 to 784 (SGGNGDDQLYGGDGNDKL), 785 to 802 (IGGAGNNYLNGGDGDDEL), 815 to 832 (SGGKGNDKLYGSEGADLL), and 833 to 850 (DGGEGNDLLKGGYGNDIY). Basic and acidic residues predominate over residues 747–763 (HIEGNDGNDRLYGDKGN). A disordered region spans residues 747–780 (HIEGNDGNDRLYGDKGNDTLSGGNGDDQLYGGDG).

The protein belongs to the RTX prokaryotic toxin (TC 1.C.11) family. In terms of processing, myristoylated by HlyC; the toxin only becomes active when modified. Mainly myristoylated, while a minor fraction is acylated with pentadecanoyl (C15:0; 26%) and heptadecanoyl (C17:0; 6%) fatty acyl groups. Fatty acylation is involved in binding to host membranes and promotes the irreversible insertion of Hemolysin into the host cell membrane. Can be activated by both myristoylation and palmitoylation, but HlyC catalyzes lysine myristoylation.

Its subcellular location is the secreted. The protein localises to the host cell membrane. In terms of biological role, bacterial hemolysins are exotoxins that attack blood cell membranes and cause cell rupture by forming a pore. This Escherichia coli protein is Hemolysin, chromosomal.